Here is a 326-residue protein sequence, read N- to C-terminus: Mitochondrial glycine transporter (326 aa).

Solcar repeat units follow at residues 22 to 106, 135 to 216, and 228 to 312; these read SKTT…LRTS, SANL…LKRY, and SSSS…LILR. A run of 6 helical transmembrane segments spans residues 28–53, 81–107, 138–163, 191–214, 232–258, and 287–305; these read FGAG…TRVQ, GTLP…RTSL, LATG…VRYE, GFGA…EQLK, INFV…KTRL, and GLGL…AWTV.

The protein belongs to the mitochondrial carrier (TC 2.A.29) family. SLC25A38 subfamily.

It localises to the mitochondrion inner membrane. The enzyme catalyses glycine(in) = glycine(out). Mitochondrial glycine transporter that imports glycine into the mitochondrial matrix. Plays an important role in providing glycine for the first enzymatic step in heme biosynthesis, the condensation of glycine with succinyl-CoA to produce 5-aminolevulinate (ALA) in the mitochondrial matrix. The polypeptide is Mitochondrial glycine transporter (Emericella nidulans (strain FGSC A4 / ATCC 38163 / CBS 112.46 / NRRL 194 / M139) (Aspergillus nidulans)).